We begin with the raw amino-acid sequence, 1080 residues long: Histone deacetylase 4 (1080 aa).

Disordered stretches follow at residues 1 to 25, 132 to 165, and 205 to 312; these read MSSQ…PPRV, KLEQ…ESAV, and TQHS…ISAE. Over residues 132–162 the composition is skewed to basic and acidic residues; it reads KLEQHRQEQELEKQHREQKLQQLKNKEKGKE. Over residues 205 to 224 the composition is skewed to polar residues; that stretch reads TQHSSLDQSSPPQSGVSGTY. Composition is skewed to basic and acidic residues over residues 233–244 and 258–273; these read DSKDDFPLRKTA and KVAE…RKDG. Low complexity predominate over residues 289 to 312; it reads SACNSAPGSGPSSPNNSSNNISAE. Positions 348–353 match the PxLPxI/L motif; sequence PSLPNI. Disordered stretches follow at residues 506–527, 558–579, and 622–646; these read KPNE…ELRE, EPIE…GQRQ, and PLSR…PTKP. Basic and acidic residues predominate over residues 509 to 527; that stretch reads EPARQHESHPEETEEELRE. A compositionally biased stretch (acidic residues) spans 560–571; it reads IESDEEEAEPQQ. Polar residues predominate over residues 625–637; the sequence is RAQSSPASATFPM. The tract at residues 651 to 1080 is histone deacetylase; that stretch reads GLVYDTLMLK…DEPMEEEPPL (430 aa). Zn(2+) contacts are provided by cysteine 663, cysteine 665, histidine 671, and cysteine 747. Histidine 799 is a catalytic residue. Residues 1055–1080 form a disordered region; sequence MASLSVGVKPAEKRPDDEPMEEEPPL.

This sequence belongs to the histone deacetylase family. HD type 2 subfamily.

The protein resides in the nucleus. It carries out the reaction N(6)-acetyl-L-lysyl-[histone] + H2O = L-lysyl-[histone] + acetate. Responsible for the deacetylation of lysine residues on the N-terminal part of the core histones (H2A, H2B, H3 and H4). Histone deacetylation gives a tag for epigenetic repression and plays an important role in transcriptional regulation, cell cycle progression and developmental events. Histone deacetylases act via the formation of large multiprotein complexes. In Gallus gallus (Chicken), this protein is Histone deacetylase 4 (HDAC4).